We begin with the raw amino-acid sequence, 466 residues long: Dynein axonemal assembly factor 11 (466 aa).

LRR repeat units lie at residues 22 to 43, 45 to 66, 67 to 88, and 89 to 110; these read SLEE…DKWC, DLKI…SKLK, KLEY…EGCE, and ELAK…KNLQ. The region spanning 123–161 is the LRRCT domain; that stretch reads NPCASFDHYREFVVATLPQLKWLDGKEIEPSERIKALQD. Positions 178–204 form a coiled coil; that stretch reads LKRAKLKEEAQRKHQEEDKNEDKRSNA. Over residues 185–202 the composition is skewed to basic and acidic residues; that stretch reads EEAQRKHQEEDKNEDKRS. Disordered stretches follow at residues 185–206, 268–288, and 391–466; these read EEAQ…NAGF, MEKQ…VKPP, and AFKS…PPLI. Basic residues predominate over residues 269–287; sequence EKQRKKQEKLSEKKKKVKP. The region spanning 301–396 is the CS domain; sequence VNEPKIDFSL…GGQRAFKSMK (96 aa). Composition is skewed to basic and acidic residues over residues 398-425 and 433-445; these read TSDR…KHSF and QEKK…RPEP. Acidic residues predominate over residues 450–460; it reads SEEDPTFEDNP.

This sequence belongs to the tilB family. In terms of assembly, interacts (via CS domain) with ZMYND10 (via C-terminus). Expressed predominantly in testis and in nasal epithelial cells.

It localises to the cytoplasm. It is found in the cell projection. Its subcellular location is the cilium. The protein localises to the dynein axonemal particle. The protein resides in the flagellum. Functionally, involved in dynein arm assembly, is important for expression and transporting outer dynein arm (ODA) proteins from the cytoplasm to the cilia. Acts as a crucial component in the formation and motility of spermatozoal flagella. The sequence is that of Dynein axonemal assembly factor 11 from Homo sapiens (Human).